An 882-amino-acid chain; its full sequence is Alanine--tRNA ligase (882 aa).

Zn(2+)-binding residues include His-571, His-575, Cys-673, and His-677.

It belongs to the class-II aminoacyl-tRNA synthetase family. Zn(2+) is required as a cofactor.

The protein resides in the cytoplasm. It catalyses the reaction tRNA(Ala) + L-alanine + ATP = L-alanyl-tRNA(Ala) + AMP + diphosphate. Catalyzes the attachment of alanine to tRNA(Ala) in a two-step reaction: alanine is first activated by ATP to form Ala-AMP and then transferred to the acceptor end of tRNA(Ala). Also edits incorrectly charged Ser-tRNA(Ala) and Gly-tRNA(Ala) via its editing domain. This Desulfotalea psychrophila (strain LSv54 / DSM 12343) protein is Alanine--tRNA ligase.